Here is a 109-residue protein sequence, read N- to C-terminus: U26-theraphotoxin-Cg1a (109 aa).

Positions 1-18 (MNTIIPLLLLSLLITVYA) are cleaved as a signal peptide. Positions 19–67 (YALEDGNKEEIQDIAESEFEASNEMLQLAHLLEADRAETEEDRNSRQKR) are excised as a propeptide. 3 cysteine pairs are disulfide-bonded: C68/C83, C75/C88, and C82/C103.

This sequence belongs to the neurotoxin 14 (magi-1) family. 07 (Jztx-56) subfamily. Expressed by the venom gland.

It localises to the secreted. Functionally, probable ion channel inhibitor. This chain is U26-theraphotoxin-Cg1a, found in Chilobrachys guangxiensis (Chinese earth tiger tarantula).